Consider the following 160-residue polypeptide: 6,7-dimethyl-8-ribityllumazine synthase (160 aa).

Residues Trp-27, 59 to 61, and 81 to 83 each bind 5-amino-6-(D-ribitylamino)uracil; these read AIE and VVI. Position 86–87 (86–87) interacts with (2S)-2-hydroxy-3-oxobutyl phosphate; the sequence is QT. His-89 serves as the catalytic Proton donor. Asn-114 is a binding site for 5-amino-6-(D-ribitylamino)uracil. (2S)-2-hydroxy-3-oxobutyl phosphate is bound at residue Arg-128.

It belongs to the DMRL synthase family. In terms of assembly, homopentamer.

It catalyses the reaction (2S)-2-hydroxy-3-oxobutyl phosphate + 5-amino-6-(D-ribitylamino)uracil = 6,7-dimethyl-8-(1-D-ribityl)lumazine + phosphate + 2 H2O + H(+). The protein operates within cofactor biosynthesis; riboflavin biosynthesis; riboflavin from 2-hydroxy-3-oxobutyl phosphate and 5-amino-6-(D-ribitylamino)uracil: step 1/2. In terms of biological role, catalyzes the formation of 6,7-dimethyl-8-ribityllumazine by condensation of 5-amino-6-(D-ribitylamino)uracil with 3,4-dihydroxy-2-butanone 4-phosphate. This is the penultimate step in the biosynthesis of riboflavin. In Mycobacterium avium (strain 104), this protein is 6,7-dimethyl-8-ribityllumazine synthase.